We begin with the raw amino-acid sequence, 300 residues long: MKSQGRPLPSVAEQFKARLPVYIGLTRLNRPIGTYLLLWPTLWALWLASEGAPSLKNLFIFVFGVLLMRSAGCVINDYADRRIDMHVERTKGRPFAQNQVTEKEALTLFGILVGVSFILVLFTNALTIYLSAGALALASTYPFMKRHTYLPQVVLGAAFAWGIPMAFAAELDAVPQQAWLLYTATVVWTVAYDTMYAMADREDDLKIGVKSTAILFGEADRAAVAGLQVLTLGVLFMVGAQHELGVYYQVSLIIVAVLFVYQQHLIRDRSSQHCFKAFLNNHWVGAAVFLGLVLEFLFRP.

The next 8 membrane-spanning stretches (helical) occupy residues 32 to 52 (IGTYLLLWPTLWALWLASEGA), 55 to 75 (LKNLFIFVFGVLLMRSAGCVI), 108 to 128 (LFGILVGVSFILVLFTNALTI), 149 to 169 (YLPQVVLGAAFAWGIPMAFAA), 178 to 198 (AWLLYTATVVWTVAYDTMYAM), 222 to 242 (AAVAGLQVLTLGVLFMVGAQH), 246 to 266 (VYYQVSLIIVAVLFVYQQHLI), and 278 to 298 (FLNNHWVGAAVFLGLVLEFLF).

It belongs to the UbiA prenyltransferase family. Requires Mg(2+) as cofactor.

The protein localises to the cell inner membrane. The enzyme catalyses all-trans-octaprenyl diphosphate + 4-hydroxybenzoate = 4-hydroxy-3-(all-trans-octaprenyl)benzoate + diphosphate. The protein operates within cofactor biosynthesis; ubiquinone biosynthesis. Functionally, catalyzes the prenylation of para-hydroxybenzoate (PHB) with an all-trans polyprenyl group. Mediates the second step in the final reaction sequence of ubiquinone-8 (UQ-8) biosynthesis, which is the condensation of the polyisoprenoid side chain with PHB, generating the first membrane-bound Q intermediate 3-octaprenyl-4-hydroxybenzoate. This chain is 4-hydroxybenzoate octaprenyltransferase, found in Hahella chejuensis (strain KCTC 2396).